The chain runs to 588 residues: Lysine--tRNA ligase (588 aa).

Residues 1-10 are compositionally biased toward polar residues; it reads MDSSVSTEPL. The disordered stretch occupies residues 1–54; that stretch reads MDSSVSTEPLSKNALKREKKAKEKEQLEQEKKAAAVAKRQMEQHNLPENDDLDP. Residues 20–47 show a composition bias toward basic and acidic residues; sequence KAKEKEQLEQEKKAAAVAKRQMEQHNLP.

It belongs to the class-II aminoacyl-tRNA synthetase family.

Its subcellular location is the cytoplasm. The enzyme catalyses tRNA(Lys) + L-lysine + ATP = L-lysyl-tRNA(Lys) + AMP + diphosphate. The polypeptide is Lysine--tRNA ligase (LYSRS) (Solanum lycopersicum (Tomato)).